The following is a 485-amino-acid chain: Protein disulfide-isomerase 1 (485 aa).

The first 20 residues, 1 to 20 (MSLSVSFIFLLVASIGAVVA), serve as a signal peptide directing secretion. 2 Thioredoxin domains span residues 21-130 (DSEN…KKSG) and 342-470 (YLEG…KYAG). 2 cysteine pairs are disulfide-bonded: Cys52/Cys55 and Cys393/Cys396. Active-site nucleophile residues include Cys393 and Cys396. Positions 482-485 (HEEL) match the Prevents secretion from ER motif.

Belongs to the protein disulfide isomerase family.

The protein localises to the endoplasmic reticulum lumen. It catalyses the reaction Catalyzes the rearrangement of -S-S- bonds in proteins.. This is Protein disulfide-isomerase 1 (pdi-1) from Caenorhabditis elegans.